The sequence spans 139 residues: Large ribosomal subunit protein uL16 (139 aa).

Belongs to the universal ribosomal protein uL16 family. As to quaternary structure, part of the 50S ribosomal subunit.

Its function is as follows. Binds 23S rRNA and is also seen to make contacts with the A and possibly P site tRNAs. The sequence is that of Large ribosomal subunit protein uL16 (rplP) from Neorickettsia sennetsu (strain ATCC VR-367 / Miyayama) (Ehrlichia sennetsu).